A 481-amino-acid chain; its full sequence is Glutamyl-tRNA(Gln) amidotransferase subunit A (481 aa).

Residues Lys74 and Ser149 each act as charge relay system in the active site. Ser173 acts as the Acyl-ester intermediate in catalysis.

The protein belongs to the amidase family. GatA subfamily. As to quaternary structure, heterotrimer of A, B and C subunits.

The catalysed reaction is L-glutamyl-tRNA(Gln) + L-glutamine + ATP + H2O = L-glutaminyl-tRNA(Gln) + L-glutamate + ADP + phosphate + H(+). Its function is as follows. Allows the formation of correctly charged Gln-tRNA(Gln) through the transamidation of misacylated Glu-tRNA(Gln) in organisms which lack glutaminyl-tRNA synthetase. The reaction takes place in the presence of glutamine and ATP through an activated gamma-phospho-Glu-tRNA(Gln). This Francisella tularensis subsp. holarctica (strain FTNF002-00 / FTA) protein is Glutamyl-tRNA(Gln) amidotransferase subunit A.